Reading from the N-terminus, the 275-residue chain is Phenylalanine-4-hydroxylase (275 aa).

Fe cation-binding residues include histidine 135, histidine 140, and glutamate 181.

Belongs to the biopterin-dependent aromatic amino acid hydroxylase family. Requires Fe(2+) as cofactor.

It catalyses the reaction (6R)-L-erythro-5,6,7,8-tetrahydrobiopterin + L-phenylalanine + O2 = (4aS,6R)-4a-hydroxy-L-erythro-5,6,7,8-tetrahydrobiopterin + L-tyrosine. It functions in the pathway amino-acid degradation; L-phenylalanine degradation; acetoacetate and fumarate from L-phenylalanine: step 1/6. This chain is Phenylalanine-4-hydroxylase (phhA), found in Mesorhizobium japonicum (strain LMG 29417 / CECT 9101 / MAFF 303099) (Mesorhizobium loti (strain MAFF 303099)).